Reading from the N-terminus, the 2259-residue chain is Protein Ycf2 (2259 aa).

Residue 1556-1563 (GSQETGRS) participates in ATP binding.

Belongs to the Ycf2 family.

The protein localises to the plastid. It is found in the chloroplast stroma. Functionally, probable ATPase of unknown function. Its presence in a non-photosynthetic plant (Epifagus virginiana) and experiments in tobacco indicate that it has an essential function which is probably not related to photosynthesis. This is Protein Ycf2 from Physcomitrium patens (Spreading-leaved earth moss).